We begin with the raw amino-acid sequence, 427 residues long: Glutamate-1-semialdehyde 2,1-aminomutase (427 aa).

Lys265 is subject to N6-(pyridoxal phosphate)lysine.

This sequence belongs to the class-III pyridoxal-phosphate-dependent aminotransferase family. HemL subfamily. In terms of assembly, homodimer. Requires pyridoxal 5'-phosphate as cofactor.

It is found in the cytoplasm. It carries out the reaction (S)-4-amino-5-oxopentanoate = 5-aminolevulinate. Its pathway is porphyrin-containing compound metabolism; protoporphyrin-IX biosynthesis; 5-aminolevulinate from L-glutamyl-tRNA(Glu): step 2/2. This is Glutamate-1-semialdehyde 2,1-aminomutase from Pseudomonas entomophila (strain L48).